The following is a 692-amino-acid chain: Elongation factor G (692 aa).

A tr-type G domain is found at 8–283 (NRIRNIGIAA…AVIDYLPAPT (276 aa)). GTP-binding positions include 17–24 (AHIDAGKT), 81–85 (DTPGH), and 135–138 (NKMD).

The protein belongs to the TRAFAC class translation factor GTPase superfamily. Classic translation factor GTPase family. EF-G/EF-2 subfamily.

It localises to the cytoplasm. Functionally, catalyzes the GTP-dependent ribosomal translocation step during translation elongation. During this step, the ribosome changes from the pre-translocational (PRE) to the post-translocational (POST) state as the newly formed A-site-bound peptidyl-tRNA and P-site-bound deacylated tRNA move to the P and E sites, respectively. Catalyzes the coordinated movement of the two tRNA molecules, the mRNA and conformational changes in the ribosome. This chain is Elongation factor G, found in Helicobacter pylori (strain P12).